The primary structure comprises 177 residues: Large ribosomal subunit protein uL6 (177 aa).

Belongs to the universal ribosomal protein uL6 family. In terms of assembly, part of the 50S ribosomal subunit.

Its function is as follows. This protein binds to the 23S rRNA, and is important in its secondary structure. It is located near the subunit interface in the base of the L7/L12 stalk, and near the tRNA binding site of the peptidyltransferase center. This is Large ribosomal subunit protein uL6 from Colwellia psychrerythraea (strain 34H / ATCC BAA-681) (Vibrio psychroerythus).